A 295-amino-acid polypeptide reads, in one-letter code: Phosphate transport system permease protein PstA (295 aa).

6 helical membrane-spanning segments follow: residues 29–49 (IALV…IWIL), 88–108 (LLIL…GIYL), 126–146 (DILL…IVVA), 149–169 (EHFS…PIVI), 198–218 (ISAI…LLAI), and 266–286 (NLAW…NILA). Positions 83 to 286 (IAGSGLLILW…LCVLLLNILA (204 aa)) constitute an ABC transmembrane type-1 domain.

The protein belongs to the binding-protein-dependent transport system permease family. CysTW subfamily.

It is found in the cell inner membrane. Functionally, part of a binding-protein-dependent transport system for phosphate; probably responsible for the translocation of the substrate across the membrane. The chain is Phosphate transport system permease protein PstA (pstA) from Yersinia pestis.